The chain runs to 199 residues: Guanylate kinase (199 aa).

A Guanylate kinase-like domain is found at 19–198; that stretch reads VTVAVVSGPT…AVAHLVELLS (180 aa). Position 26–33 (26–33) interacts with ATP; sequence GPTAVGKG.

The protein belongs to the guanylate kinase family.

It is found in the cytoplasm. It catalyses the reaction GMP + ATP = GDP + ADP. Functionally, essential for recycling GMP and indirectly, cGMP. The sequence is that of Guanylate kinase from Cutibacterium acnes (strain DSM 16379 / KPA171202) (Propionibacterium acnes).